A 58-amino-acid chain; its full sequence is Potassium channel toxin alpha-KTx BmKcug1a (58 aa).

The signal sequence occupies residues M1 to A21. At Q22 the chain carries Pyrrolidone carboxylic acid. 3 cysteine pairs are disulfide-bonded: C28–C49, C34–C54, and C38–C56.

Belongs to the short scorpion toxin superfamily. Potassium channel inhibitor family. Alpha-KTx 01 subfamily. Expressed by the venom gland.

Its subcellular location is the secreted. Its function is as follows. Potent blocker of both large-conductance calcium-activated potassium channels (KCa1.1/KCNMA1) and voltage-gated potassium channels (Kv1.3/KCNA3 and ERG1/Kv11.1/KCNH2). This Olivierus martensii (Manchurian scorpion) protein is Potassium channel toxin alpha-KTx BmKcug1a.